The sequence spans 814 residues: Acyl-coenzyme A dehydrogenase (814 aa).

The active-site Proton acceptor is the glutamate 497.

The protein belongs to the acyl-CoA dehydrogenase family. FAD is required as a cofactor.

The catalysed reaction is a medium-chain 2,3-saturated fatty acyl-CoA + oxidized [electron-transfer flavoprotein] + H(+) = a medium-chain (2E)-enoyl-CoA + reduced [electron-transfer flavoprotein]. It catalyses the reaction a long-chain 2,3-saturated fatty acyl-CoA + oxidized [electron-transfer flavoprotein] + H(+) = a long-chain (2E)-enoyl-CoA + reduced [electron-transfer flavoprotein]. Its pathway is lipid metabolism; fatty acid beta-oxidation. Catalyzes the dehydrogenation of acyl-coenzymes A (acyl-CoAs) to 2-enoyl-CoAs, the first step of the beta-oxidation cycle of fatty acid degradation. Is required for E.coli to utilize dodecanoate or oleate as the sole carbon and energy source for growth. In Escherichia coli (strain K12), this protein is Acyl-coenzyme A dehydrogenase.